We begin with the raw amino-acid sequence, 1260 residues long: Kinesin-like protein KIN-14E (1260 aa).

Positions 115-274 (FQKDPIPTSL…PGREEIEALL (160 aa)) constitute a MyTH4 domain. Residues 279–593 (LTTIVFFLDE…HINDVMLRRY (315 aa)) enclose the FERM domain. Coiled-coil stretches lie at residues 615 to 676 (QNFE…LLEV) and 753 to 853 (SKRL…TAAI). Residues 888 to 1209 (KIRVYCRIRP…LLYASRVRTI (322 aa)) form the Kinesin motor domain. 972 to 977 (GSGKTF) lines the ATP pocket. The interval 1217 to 1239 (ISSKEMVRLKKLVAYWKEQAGKK) is calmodulin-binding. Residues 1221-1260 (EMVRLKKLVAYWKEQAGKKGEEEDLVDIEEDRTRKDEADS) are homodimerization domain. The segment at 1236 to 1260 (AGKKGEEEDLVDIEEDRTRKDEADS) is disordered. Residues 1251–1260 (DRTRKDEADS) show a composition bias toward basic and acidic residues.

It belongs to the TRAFAC class myosin-kinesin ATPase superfamily. Kinesin family. KIN-14 subfamily. In terms of assembly, homodimer (via C-terminus). Binds microtubules via its N-terminus containing the MyTH4 domain and binds F-actin via its FERM domain. Interacts with KIPK1. Interacts with KIPK2. Interacts with AN. Interacts with AIR9. Interacts (via C-terminus) with KIC, CAM2, CAM4 and CAM6. KIC and calmodulin show competitive binding to KCBP. Binding to calmodulin inhibits microtubule binding activity. Binding to KIC inhibits microtubule binding activity and microtubule-stimulated ATPase activity. As to expression, widely expressed with the highest levels in flowers. Strongly expressed in the root tip. Highly detected in the branch apex of the trichome.

It localises to the cytoplasm. The protein localises to the cell cortex. Its subcellular location is the cytoskeleton. It is found in the spindle. The protein resides in the phragmoplast. In terms of biological role, minus-end microtubule-dependent motor protein involved in the regulation of cell division and trichome morphogenesis through microtubules bundling. Possesses basal and microtubule-stimulated ATPase activities. Acts as a hub that brings together microtubules and actin filaments to modulate the cytoskeleton during trichome formation and morphogenesis. Could be involved in the negative regulation of root growth. The protein is Kinesin-like protein KIN-14E of Arabidopsis thaliana (Mouse-ear cress).